A 232-amino-acid chain; its full sequence is 5'-methylthioadenosine/S-adenosylhomocysteine nucleosidase (232 aa).

The Proton acceptor role is filled by E12. Substrate is bound by residues G78, M153, and 174–175; that span reads ME. The Proton donor role is filled by D198.

It belongs to the PNP/UDP phosphorylase family. MtnN subfamily.

The enzyme catalyses S-adenosyl-L-homocysteine + H2O = S-(5-deoxy-D-ribos-5-yl)-L-homocysteine + adenine. The catalysed reaction is S-methyl-5'-thioadenosine + H2O = 5-(methylsulfanyl)-D-ribose + adenine. It carries out the reaction 5'-deoxyadenosine + H2O = 5-deoxy-D-ribose + adenine. It participates in amino-acid biosynthesis; L-methionine biosynthesis via salvage pathway; S-methyl-5-thio-alpha-D-ribose 1-phosphate from S-methyl-5'-thioadenosine (hydrolase route): step 1/2. In terms of biological role, catalyzes the irreversible cleavage of the glycosidic bond in both 5'-methylthioadenosine (MTA) and S-adenosylhomocysteine (SAH/AdoHcy) to adenine and the corresponding thioribose, 5'-methylthioribose and S-ribosylhomocysteine, respectively. Also cleaves 5'-deoxyadenosine, a toxic by-product of radical S-adenosylmethionine (SAM) enzymes, into 5-deoxyribose and adenine. The chain is 5'-methylthioadenosine/S-adenosylhomocysteine nucleosidase from Hydrogenovibrio crunogenus (strain DSM 25203 / XCL-2) (Thiomicrospira crunogena).